Consider the following 424-residue polypeptide: Cysteate synthase (424 aa).

Lys-106 is modified (N6-(pyridoxal phosphate)lysine). Pyridoxal 5'-phosphate is bound by residues Asn-132 and Thr-381.

This sequence belongs to the threonine synthase family. Cysteate synthase subfamily. In terms of assembly, homotrimer. Requires pyridoxal 5'-phosphate as cofactor.

It carries out the reaction O-phospho-L-serine + sulfite + H(+) = L-cysteate + phosphate. It functions in the pathway cofactor biosynthesis; coenzyme M biosynthesis. Specifically catalyzes the beta-elimination of phosphate from L-phosphoserine and the beta-addition of sulfite to the dehydroalanine intermediate to produce L-cysteate. The sequence is that of Cysteate synthase from Methanoregula boonei (strain DSM 21154 / JCM 14090 / 6A8).